Reading from the N-terminus, the 93-residue chain is Co-chaperonin GroES (93 aa).

Belongs to the GroES chaperonin family. In terms of assembly, heptamer of 7 subunits arranged in a ring. Interacts with the chaperonin GroEL.

It localises to the cytoplasm. Functionally, together with the chaperonin GroEL, plays an essential role in assisting protein folding. The GroEL-GroES system forms a nano-cage that allows encapsulation of the non-native substrate proteins and provides a physical environment optimized to promote and accelerate protein folding. GroES binds to the apical surface of the GroEL ring, thereby capping the opening of the GroEL channel. The chain is Co-chaperonin GroES from Streptococcus constellatus.